Here is a 553-residue protein sequence, read N- to C-terminus: Dihydroxy-acid dehydratase 1 (553 aa).

A Mg(2+)-binding site is contributed by Asp-78. Residue Cys-119 participates in [2Fe-2S] cluster binding. Mg(2+) contacts are provided by Asp-120 and Lys-121. Lys-121 is modified (N6-carboxylysine). Residue Cys-191 coordinates [2Fe-2S] cluster. Glu-444 serves as a coordination point for Mg(2+). The Proton acceptor role is filled by Ser-470.

The protein belongs to the IlvD/Edd family. Homodimer. Requires [2Fe-2S] cluster as cofactor. Mg(2+) serves as cofactor.

The enzyme catalyses (2R)-2,3-dihydroxy-3-methylbutanoate = 3-methyl-2-oxobutanoate + H2O. The catalysed reaction is (2R,3R)-2,3-dihydroxy-3-methylpentanoate = (S)-3-methyl-2-oxopentanoate + H2O. It participates in amino-acid biosynthesis; L-isoleucine biosynthesis; L-isoleucine from 2-oxobutanoate: step 3/4. Its pathway is amino-acid biosynthesis; L-valine biosynthesis; L-valine from pyruvate: step 3/4. Functionally, functions in the biosynthesis of branched-chain amino acids. Catalyzes the dehydration of (2R,3R)-2,3-dihydroxy-3-methylpentanoate (2,3-dihydroxy-3-methylvalerate) into 2-oxo-3-methylpentanoate (2-oxo-3-methylvalerate) and of (2R)-2,3-dihydroxy-3-methylbutanoate (2,3-dihydroxyisovalerate) into 2-oxo-3-methylbutanoate (2-oxoisovalerate), the penultimate precursor to L-isoleucine and L-valine, respectively. The polypeptide is Dihydroxy-acid dehydratase 1 (Methanosarcina acetivorans (strain ATCC 35395 / DSM 2834 / JCM 12185 / C2A)).